Here is a 211-residue protein sequence, read N- to C-terminus: Protein-L-isoaspartate O-methyltransferase (211 aa).

Ser-62 is an active-site residue.

This sequence belongs to the methyltransferase superfamily. L-isoaspartyl/D-aspartyl protein methyltransferase family.

Its subcellular location is the cytoplasm. The catalysed reaction is [protein]-L-isoaspartate + S-adenosyl-L-methionine = [protein]-L-isoaspartate alpha-methyl ester + S-adenosyl-L-homocysteine. Catalyzes the methyl esterification of L-isoaspartyl residues in peptides and proteins that result from spontaneous decomposition of normal L-aspartyl and L-asparaginyl residues. It plays a role in the repair and/or degradation of damaged proteins. This Shewanella amazonensis (strain ATCC BAA-1098 / SB2B) protein is Protein-L-isoaspartate O-methyltransferase.